The primary structure comprises 418 residues: EPS I polysaccharide export inner membrane protein EpsF (418 aa).

10 helical membrane passes run 21–41 (VLVVIGMLLAVPMAFPLFPIA), 45–65 (CAAILAILLPLGRLQHVLATA), 142–162 (PLMVWAILIFISLMLVWIAIY), 170–190 (YVVFVAYLSTITLYALQGSAI), 222–242 (AGTHSSAAALLLVCATVMLFL), 262–282 (LLVLLVLAVAAVAFGSAEFVM), 296–316 (SAWEFQLAVEAVLACLFAWLF), 326–346 (LTYFLFVLLCASTSFFAPAVG), 347–367 (ARLFRYTYCFYIVYLCVFFFA), and 377–397 (KTLASLLFLASLGWAFYIVDV).

The protein to S.marcescens SfuB.

It localises to the cell inner membrane. Probably involved in polymerization and/or export of exopolysaccharide EPS I which functions as a virulence factor. May play a role in export of EPS I or its intermediates across the membranes. The polypeptide is EPS I polysaccharide export inner membrane protein EpsF (epsF) (Ralstonia solanacearum (Pseudomonas solanacearum)).